Consider the following 156-residue polypeptide: Endoribonuclease YbeY (156 aa).

Residues His122, His126, and His132 each contribute to the Zn(2+) site.

This sequence belongs to the endoribonuclease YbeY family. Zn(2+) is required as a cofactor.

The protein localises to the cytoplasm. In terms of biological role, single strand-specific metallo-endoribonuclease involved in late-stage 70S ribosome quality control and in maturation of the 3' terminus of the 16S rRNA. This Bacillus cytotoxicus (strain DSM 22905 / CIP 110041 / 391-98 / NVH 391-98) protein is Endoribonuclease YbeY.